The chain runs to 390 residues: Neutrophil cytosol factor 1 (390 aa).

The 122-residue stretch at 4–125 (TFIRHIALLG…DFFKVRPDDL (122 aa)) folds into the PX domain. 2 SH3 domains span residues 156–215 (IILQ…PLDS) and 226–285 (YAGE…KAGE). Positions 291 to 390 (QRQIRGRGAP…STKRKLTSAV (100 aa)) are disordered. Residues S304, S321, S329, and S346 each carry the phosphoserine modification. Basic and acidic residues predominate over residues 374 to 383 (ILHRCTESTK).

As to quaternary structure, component of the phagocyte NADPH oxidase complex composed of an obligatory core heterodimer formed by the membrane proteins CYBA and CYBB and the cytosolic regulatory subunits NCF1/p47-phox, NCF2/p67-phox, NCF4/p40-phox and the small GTPase RAC1 or RAC2. Part of a cytosolic complex composed at least by NCF1, NCF2 and NCF4. Interacts (via C-terminus) with NCF2 (via the C-terminal SH3 domain). Interacts with NCF4. Interacts with CYBB. Interacts (via the second SH3 domain) with CYBA; interaction is phosphorylation-dependent. Interacts with NOXA1. Interacts with ADAM15. Interacts with TRAF4. Interacts with FASLG. Interacts with PARK7 (via C-terminus); the interaction is enhanced by LPS and modulates NCF1 phosphorylation and membrane translocation. Post-translationally, phosphorylated by PRKCD; phosphorylation induces activation of NCF1, leading to assembly and activation of the NADPH oxidase complex.

The protein localises to the cytoplasm. It is found in the cytosol. Its subcellular location is the membrane. In terms of biological role, subunit of the phagocyte NADPH oxidase complex that mediates the transfer of electrons from cytosolic NADPH to O2 to produce the superoxide anion (O2(-)). In the activated complex, electrons are first transferred from NADPH to flavin adenine dinucleotide (FAD) and subsequently transferred via two heme molecules to molecular oxygen, producing superoxide through an outer-sphere reaction. Activation of the NADPH oxidase complex is initiated by the assembly of cytosolic subunits of the NADPH oxidase complex with the core NADPH oxidase complex to form a complex at the plasma membrane or phagosomal membrane. This activation process is initiated by phosphorylation dependent binding of the cytosolic NCF1/p47-phox subunit to the C-terminus of CYBA/p22-phox. The polypeptide is Neutrophil cytosol factor 1 (Mus musculus (Mouse)).